Here is a 93-residue protein sequence, read N- to C-terminus: Cell division protein FtsB (93 aa).

At 1–3 (MRL) the chain is on the cytoplasmic side. Residues 4-21 (FILSLFALLVMFQYDFWF) traverse the membrane as a helical segment. Residues 22 to 93 (GKNGYLDYQD…FYRIVKNKNR (72 aa)) lie on the Periplasmic side of the membrane. The stretch at 28 to 76 (DYQDIKAEIIQRKQENKKLSQRNQTIFAEIQDLKNGIEAIEERARMEHE) forms a coiled coil.

The protein belongs to the FtsB family. Part of a complex composed of FtsB, FtsL and FtsQ.

It localises to the cell inner membrane. In terms of biological role, essential cell division protein. May link together the upstream cell division proteins, which are predominantly cytoplasmic, with the downstream cell division proteins, which are predominantly periplasmic. The sequence is that of Cell division protein FtsB from Histophilus somni (strain 129Pt) (Haemophilus somnus).